A 187-amino-acid polypeptide reads, in one-letter code: Probable chemoreceptor glutamine deamidase CheD 1 (187 aa).

Belongs to the CheD family.

The catalysed reaction is L-glutaminyl-[protein] + H2O = L-glutamyl-[protein] + NH4(+). Its function is as follows. Probably deamidates glutamine residues to glutamate on methyl-accepting chemotaxis receptors (MCPs), playing an important role in chemotaxis. In Ruegeria sp. (strain TM1040) (Silicibacter sp.), this protein is Probable chemoreceptor glutamine deamidase CheD 1.